The primary structure comprises 210 residues: Somatotropin-2 (210 aa).

The signal sequence occupies residues 1–22 (MGQVFLLMPVLLVSCFLSQGAA). His38 provides a ligand contact to Zn(2+). A disulfide bridge connects residues Cys71 and Cys183. Glu192 serves as a coordination point for Zn(2+). An intrachain disulfide couples Cys200 to Cys208.

It belongs to the somatotropin/prolactin family.

The protein resides in the secreted. Functionally, growth hormone plays an important role in growth control and is involved in the regulation of several anabolic processes. Implicated as an osmoregulatory substance important for seawater adaptation. The chain is Somatotropin-2 (gh2) from Oncorhynchus nerka (Sockeye salmon).